The chain runs to 106 residues: ATPase inhibitor, mitochondrial (106 aa).

The transit peptide at 1–25 directs the protein to the mitochondrion; it reads MAGSALAVRARFGVWGMKVLQTRGF. An N-terminal inhibitory region region spans residues 26 to 52; the sequence is VSDSSDSMDTGAGSIREAGGAFGKREK. The interval 26-58 is disordered; it reads VSDSSDSMDTGAGSIREAGGAFGKREKAEEDRY. Phosphoserine is present on serine 39. A compositionally biased stretch (basic and acidic residues) spans 48–58; sequence GKREKAEEDRY. Positions 60–106 form a coiled coil; that stretch reads REKTKEQLAALRKHHEDEIDHHSKEIERLQKQIERHKKKIQQLKNNH. The segment at 74 to 106 is antiparallel alpha-helical coiled coil region; sequence HEDEIDHHSKEIERLQKQIERHKKKIQQLKNNH. Residue lysine 103 is modified to N6-succinyllysine.

This sequence belongs to the ATPase inhibitor family. As to quaternary structure, homodimer; represents the active form and is present at a pH value below 6.5. Homotetramer; represents the inactive form and is present at a pH value above 7.0.

It is found in the mitochondrion. In terms of biological role, endogenous F(1)F(o)-ATPase inhibitor limiting ATP depletion when the mitochondrial membrane potential falls below a threshold and the F(1)F(o)-ATP synthase starts hydrolyzing ATP to pump protons out of the mitochondrial matrix. Required to avoid the consumption of cellular ATP when the F(1)F(o)-ATP synthase enzyme acts as an ATP hydrolase. Indirectly acts as a regulator of heme synthesis in erythroid tissues: regulates heme synthesis by modulating the mitochondrial pH and redox potential, allowing FECH to efficiently catalyze the incorporation of iron into protoporphyrin IX to produce heme. In Mus musculus (Mouse), this protein is ATPase inhibitor, mitochondrial.